The following is a 255-amino-acid chain: tRNA pseudouridine synthase B (255 aa).

Residue aspartate 58 is the Nucleophile of the active site.

The protein belongs to the pseudouridine synthase TruB family. Type 1 subfamily.

It carries out the reaction uridine(55) in tRNA = pseudouridine(55) in tRNA. Responsible for synthesis of pseudouridine from uracil-55 in the psi GC loop of transfer RNAs. The protein is tRNA pseudouridine synthase B of Chlorobium chlorochromatii (strain CaD3).